An 85-amino-acid polypeptide reads, in one-letter code: Cell division topological specificity factor (85 aa).

Belongs to the MinE family.

Its function is as follows. Prevents the cell division inhibition by proteins MinC and MinD at internal division sites while permitting inhibition at polar sites. This ensures cell division at the proper site by restricting the formation of a division septum at the midpoint of the long axis of the cell. This chain is Cell division topological specificity factor, found in Deinococcus geothermalis (strain DSM 11300 / CIP 105573 / AG-3a).